A 492-amino-acid polypeptide reads, in one-letter code: MRPRRRGLAYHHTKPKGQLSQGHYPTTSNDGQRRKVGNSEAFQSFDIWKNLDRIRSTKKNAGQFIKGSLLILPMRTEDKQQFDECMDELHKYISKDILRCYPQKEQKDEGMLFYIVLKDFNILDSCFVLSVLLAFQKRLWMAPSEKSYFRVPKNINLTGSFYLPKNIETGRGHIITSYRREQPSSSIVEVGFNVVPDFQQFQVKACHVSKFMNELSNFFSQVEFGKCEANVINYFKREYNRTYSQISLALYELPLIGDGLFDIKSYISKTRPIIETSKAQMIKHISEMKAYNEISGLQGDQFPRQQRPLSNSPSSNSISSSQTIEAGATSYQTQPQRHAVNKPSNVLNSSNRHSGPKTFEDGRYSEGNKPGFMTQDEIKQHCIGTIKASMDAVKKKSSYQILKTYVRCPRQNYIDIVYQNLNDLRSKTNCNIVVLNLNNLHESQMWLESLNTTNYTIFAQAPHPSTIRVISIGGVGEYIVKALELILNILEH.

Residues 1–15 (MRPRRRGLAYHHTKP) are compositionally biased toward basic residues. 2 disordered regions span residues 1 to 35 (MRPRRRGLAYHHTKPKGQLSQGHYPTTSNDGQRRK) and 300 to 371 (DQFP…NKPG). The segment covering 18 to 30 (QLSQGHYPTTSND) has biased composition (polar residues). Residues 310–321 (SNSPSSNSISSS) are compositionally biased toward low complexity. The span at 329-353 (TSYQTQPQRHAVNKPSNVLNSSNRH) shows a compositional bias: polar residues.

In terms of assembly, component of the 18S U1 snRNP particle, a subcomplex of the spliceosome. Interacts with the nuclear cap-binding complex CBC1-CBC2 (yCBC). Directly contacts intronic sequences of substrate pre-RNA.

It is found in the nucleus. Its function is as follows. Component of the U1 snRNP particle, which recognizes and binds the 5'-splice site of pre-mRNA. Together with other non-snRNP factors, U1 snRNP forms the spliceosomal commitment complex, that targets pre-mRNA to the splicing pathway. The chain is 56 kDa U1 small nuclear ribonucleoprotein component (SNU56) from Saccharomyces cerevisiae (strain ATCC 204508 / S288c) (Baker's yeast).